Here is a 383-residue protein sequence, read N- to C-terminus: ATP phosphoribosyltransferase regulatory subunit (383 aa).

The protein belongs to the class-II aminoacyl-tRNA synthetase family. HisZ subfamily. As to quaternary structure, heteromultimer composed of HisG and HisZ subunits.

It is found in the cytoplasm. It participates in amino-acid biosynthesis; L-histidine biosynthesis; L-histidine from 5-phospho-alpha-D-ribose 1-diphosphate: step 1/9. In terms of biological role, required for the first step of histidine biosynthesis. May allow the feedback regulation of ATP phosphoribosyltransferase activity by histidine. This chain is ATP phosphoribosyltransferase regulatory subunit, found in Neisseria meningitidis serogroup C / serotype 2a (strain ATCC 700532 / DSM 15464 / FAM18).